The following is a 404-amino-acid chain: uncharacterized protein (404 aa).

Polar residues predominate over residues 262 to 278 (VSTGDTSPYGTEDSSPA). 2 disordered regions span residues 262-307 (VSTG…SPSL) and 320-340 (KKSHSANDSEEFFREDDGGAD). A phosphoserine mark is found at serine 268, serine 276, and serine 279. Phosphothreonine occurs at positions 290 and 293. A phosphoserine mark is found at serine 304, serine 306, serine 324, serine 358, and serine 362. The span at 320–336 (KKSHSANDSEEFFREDD) shows a compositional bias: basic and acidic residues.

This is an uncharacterized protein from Rattus norvegicus (Rat).